Here is an 85-residue protein sequence, read N- to C-terminus: Translation initiation factor IF-1 1 (85 aa).

One can recognise an S1-like domain in the interval 1–72 (MAKEELIEMS…SKGRITFRHL (72 aa)).

The protein belongs to the IF-1 family. As to quaternary structure, component of the 30S ribosomal translation pre-initiation complex which assembles on the 30S ribosome in the order IF-2 and IF-3, IF-1 and N-formylmethionyl-tRNA(fMet); mRNA recruitment can occur at any time during PIC assembly.

The protein localises to the cytoplasm. In terms of biological role, one of the essential components for the initiation of protein synthesis. Stabilizes the binding of IF-2 and IF-3 on the 30S subunit to which N-formylmethionyl-tRNA(fMet) subsequently binds. Helps modulate mRNA selection, yielding the 30S pre-initiation complex (PIC). Upon addition of the 50S ribosomal subunit IF-1, IF-2 and IF-3 are released leaving the mature 70S translation initiation complex. This is Translation initiation factor IF-1 1 from Aromatoleum aromaticum (strain DSM 19018 / LMG 30748 / EbN1) (Azoarcus sp. (strain EbN1)).